Reading from the N-terminus, the 261-residue chain is Cytochrome c oxidase subunit 3 (261 aa).

Over 1–15 the chain is Mitochondrial matrix; it reads MAHQAHAYHMVDPSP. Residues 16–34 traverse the membrane as a helical segment; the sequence is WPLTGAVAALLMSSGLAIW. The Mitochondrial intermembrane portion of the chain corresponds to 35–40; sequence FHLHSM. Residues 41–66 traverse the membrane as a helical segment; sequence TLIVLGMILLILTMIQWWRDIIREGT. The Mitochondrial matrix portion of the chain corresponds to 67 to 72; that stretch reads FQGHHT. The chain crosses the membrane as a helical span at residues 73–105; that stretch reads PPVQKGLRYGMILFITSEVFFFLGFFWAFYHSS. The Mitochondrial intermembrane portion of the chain corresponds to 106–128; that stretch reads LAPTPELGGCWPPTGLTTLDPFE. A helical transmembrane segment spans residues 129-152; that stretch reads VPLLNTAVLLASGVTVTWAHHSLM. The Mitochondrial matrix portion of the chain corresponds to 153-155; it reads EGE. A helical membrane pass occupies residues 156–183; the sequence is RKQAIQSLALTILLGLYFTALQAMEYYE. The Mitochondrial intermembrane segment spans residues 184–190; the sequence is APFTIAD. A helical transmembrane segment spans residues 191–223; it reads GVYGSTFFVATGFHGLHVIIGSTFLAVCLLRQV. Over 224–232 the chain is Mitochondrial matrix; that stretch reads LFHFTSDHH. The chain crosses the membrane as a helical span at residues 233–256; that stretch reads FGFEAAAWYWHFVDVVWLFLYVSI. Topologically, residues 257–261 are mitochondrial intermembrane; it reads YWWGS.

It belongs to the cytochrome c oxidase subunit 3 family. As to quaternary structure, component of the cytochrome c oxidase (complex IV, CIV), a multisubunit enzyme composed of 14 subunits. The complex is composed of a catalytic core of 3 subunits MT-CO1, MT-CO2 and MT-CO3, encoded in the mitochondrial DNA, and 11 supernumerary subunits COX4I, COX5A, COX5B, COX6A, COX6B, COX6C, COX7A, COX7B, COX7C, COX8 and NDUFA4, which are encoded in the nuclear genome. The complex exists as a monomer or a dimer and forms supercomplexes (SCs) in the inner mitochondrial membrane with NADH-ubiquinone oxidoreductase (complex I, CI) and ubiquinol-cytochrome c oxidoreductase (cytochrome b-c1 complex, complex III, CIII), resulting in different assemblies (supercomplex SCI(1)III(2)IV(1) and megacomplex MCI(2)III(2)IV(2)).

The protein resides in the mitochondrion inner membrane. It catalyses the reaction 4 Fe(II)-[cytochrome c] + O2 + 8 H(+)(in) = 4 Fe(III)-[cytochrome c] + 2 H2O + 4 H(+)(out). Component of the cytochrome c oxidase, the last enzyme in the mitochondrial electron transport chain which drives oxidative phosphorylation. The respiratory chain contains 3 multisubunit complexes succinate dehydrogenase (complex II, CII), ubiquinol-cytochrome c oxidoreductase (cytochrome b-c1 complex, complex III, CIII) and cytochrome c oxidase (complex IV, CIV), that cooperate to transfer electrons derived from NADH and succinate to molecular oxygen, creating an electrochemical gradient over the inner membrane that drives transmembrane transport and the ATP synthase. Cytochrome c oxidase is the component of the respiratory chain that catalyzes the reduction of oxygen to water. Electrons originating from reduced cytochrome c in the intermembrane space (IMS) are transferred via the dinuclear copper A center (CU(A)) of subunit 2 and heme A of subunit 1 to the active site in subunit 1, a binuclear center (BNC) formed by heme A3 and copper B (CU(B)). The BNC reduces molecular oxygen to 2 water molecules using 4 electrons from cytochrome c in the IMS and 4 protons from the mitochondrial matrix. In Danio rerio (Zebrafish), this protein is Cytochrome c oxidase subunit 3 (mt-co3).